The sequence spans 496 residues: Cobyric acid synthase (496 aa).

Residues 258–427 (TLTVAAIRLP…WHGLLDNDAL (170 aa)) form the GATase cobBQ-type domain. C339 (nucleophile) is an active-site residue. The active site involves H419.

Belongs to the CobB/CobQ family. CobQ subfamily.

The protein operates within cofactor biosynthesis; adenosylcobalamin biosynthesis. Functionally, catalyzes amidations at positions B, D, E, and G on adenosylcobyrinic A,C-diamide. NH(2) groups are provided by glutamine, and one molecule of ATP is hydrogenolyzed for each amidation. This chain is Cobyric acid synthase, found in Mycolicibacterium smegmatis (strain ATCC 700084 / mc(2)155) (Mycobacterium smegmatis).